A 141-amino-acid polypeptide reads, in one-letter code: Hemoglobin subunit alpha (141 aa).

In terms of domain architecture, Globin spans 1-141 (VLSPDDKKHV…VSTVLTSKYR (141 aa)). Ser-3 is subject to Phosphoserine. N6-succinyllysine occurs at positions 7 and 11. An N6-acetyllysine; alternate modification is found at Lys-16. Lys-16 carries the N6-succinyllysine; alternate modification. Tyr-24 carries the phosphotyrosine modification. Phosphoserine is present on Ser-35. An N6-succinyllysine modification is found at Lys-40. Ser-49 is subject to Phosphoserine. His-58 contributes to the O2 binding site. His-87 serves as a coordination point for heme b. Ser-102 is modified (phosphoserine). Thr-108 is modified (phosphothreonine). Residues Ser-124 and Ser-131 each carry the phosphoserine modification. Phosphothreonine is present on residues Thr-134 and Thr-137. Phosphoserine is present on Ser-138.

Belongs to the globin family. Heterotetramer of two alpha chains and two beta chains. As to expression, red blood cells.

Involved in oxygen transport from the lung to the various peripheral tissues. Functionally, hemopressin acts as an antagonist peptide of the cannabinoid receptor CNR1. Hemopressin-binding efficiently blocks cannabinoid receptor CNR1 and subsequent signaling. In Theropithecus gelada (Gelada baboon), this protein is Hemoglobin subunit alpha (HBA).